A 373-amino-acid chain; its full sequence is Putative F-box protein At1g76830 (373 aa).

The F-box domain maps to 4–49; sequence ITSFENLPEELKREILLRMSPNSLVTCSRVSKKLASMIRTKSFKEL.

The sequence is that of Putative F-box protein At1g76830 from Arabidopsis thaliana (Mouse-ear cress).